Consider the following 689-residue polypeptide: Glycine--tRNA ligase beta subunit (689 aa).

This sequence belongs to the class-II aminoacyl-tRNA synthetase family. In terms of assembly, tetramer of two alpha and two beta subunits.

It localises to the cytoplasm. The catalysed reaction is tRNA(Gly) + glycine + ATP = glycyl-tRNA(Gly) + AMP + diphosphate. This chain is Glycine--tRNA ligase beta subunit, found in Salmonella choleraesuis (strain SC-B67).